The chain runs to 224 residues: MQPREIAKFIDHTALTTEKTEQDILKLCDEAVAHHFRSVCINSGYIPLAKQKLTGTGVKICTVVGFPLGANLSSVKAFEAQEAIKAGAQEVDMVINVGLIKSGKWDEVRSDIEQVLHACRGTLLKVILETCLLTKAEIVHACEICRDLNVGFVKTSTGFNKSGATVADVALMRQTVGENIGVKASGGIRDTQTTLAMINAGATRIGASAGIAIIQGLQDNNGGY.

D92 serves as the catalytic Proton donor/acceptor. K154 (schiff-base intermediate with acetaldehyde) is an active-site residue. The active-site Proton donor/acceptor is K183.

Belongs to the DeoC/FbaB aldolase family. DeoC type 1 subfamily.

Its subcellular location is the cytoplasm. It catalyses the reaction 2-deoxy-D-ribose 5-phosphate = D-glyceraldehyde 3-phosphate + acetaldehyde. Its pathway is carbohydrate degradation; 2-deoxy-D-ribose 1-phosphate degradation; D-glyceraldehyde 3-phosphate and acetaldehyde from 2-deoxy-alpha-D-ribose 1-phosphate: step 2/2. Functionally, catalyzes a reversible aldol reaction between acetaldehyde and D-glyceraldehyde 3-phosphate to generate 2-deoxy-D-ribose 5-phosphate. The protein is Deoxyribose-phosphate aldolase of Actinobacillus succinogenes (strain ATCC 55618 / DSM 22257 / CCUG 43843 / 130Z).